Reading from the N-terminus, the 63-residue chain is uncharacterized protein (63 aa).

A helical transmembrane segment spans residues 15-37 (ISHCHLPLSPATAIAIIICFRIV).

It is found in the membrane. This is an uncharacterized protein from Saccharomyces cerevisiae (strain ATCC 204508 / S288c) (Baker's yeast).